The sequence spans 387 residues: Cysteine desulfurase IscS (387 aa).

Pyridoxal 5'-phosphate is bound by residues 73 to 74, Asn155, Gln183, and 203 to 205; these read AT and SAH. The residue at position 206 (Lys206) is an N6-(pyridoxal phosphate)lysine. Position 241 (Thr241) interacts with pyridoxal 5'-phosphate. Cys328 acts as the Cysteine persulfide intermediate in catalysis. Position 328 (Cys328) interacts with [2Fe-2S] cluster.

The protein belongs to the class-V pyridoxal-phosphate-dependent aminotransferase family. NifS/IscS subfamily. In terms of assembly, homodimer. Forms a heterotetramer with IscU, interacts with other sulfur acceptors. The cofactor is pyridoxal 5'-phosphate.

It localises to the cytoplasm. It catalyses the reaction (sulfur carrier)-H + L-cysteine = (sulfur carrier)-SH + L-alanine. The protein operates within cofactor biosynthesis; iron-sulfur cluster biosynthesis. In terms of biological role, master enzyme that delivers sulfur to a number of partners involved in Fe-S cluster assembly, tRNA modification or cofactor biosynthesis. Catalyzes the removal of elemental sulfur atoms from cysteine to produce alanine. Functions as a sulfur delivery protein for Fe-S cluster synthesis onto IscU, an Fe-S scaffold assembly protein, as well as other S acceptor proteins. The protein is Cysteine desulfurase IscS of Helicobacter pylori (strain ATCC 700392 / 26695) (Campylobacter pylori).